The following is a 329-amino-acid chain: Thiamine thiazole synthase (329 aa).

Substrate-binding positions include Cys-86, Glu-107–Ala-108, Gly-115, and Val-180. The residue at position 218 (Cys-218) is a 2,3-didehydroalanine (Cys). Substrate is bound by residues Asp-220, His-235, Met-287, and Arg-297 to Gly-299.

It belongs to the THI4 family. In terms of assembly, homooctamer. Requires Fe cation as cofactor. Post-translationally, during the catalytic reaction, a sulfide is transferred from Cys-218 to a reaction intermediate, generating a dehydroalanine residue.

Its subcellular location is the cytoplasm. It localises to the nucleus. It catalyses the reaction [ADP-thiazole synthase]-L-cysteine + glycine + NAD(+) = [ADP-thiazole synthase]-dehydroalanine + ADP-5-ethyl-4-methylthiazole-2-carboxylate + nicotinamide + 3 H2O + 2 H(+). Its function is as follows. Involved in biosynthesis of the thiamine precursor thiazole. Catalyzes the conversion of NAD and glycine to adenosine diphosphate 5-(2-hydroxyethyl)-4-methylthiazole-2-carboxylic acid (ADT), an adenylated thiazole intermediate. The reaction includes an iron-dependent sulfide transfer from a conserved cysteine residue of the protein to a thiazole intermediate. The enzyme can only undergo a single turnover, which suggests it is a suicide enzyme. May have additional roles in adaptation to various stress conditions and in DNA damage tolerance. This Phaeosphaeria nodorum (strain SN15 / ATCC MYA-4574 / FGSC 10173) (Glume blotch fungus) protein is Thiamine thiazole synthase.